A 465-amino-acid chain; its full sequence is Lysosomal dipeptide transporter MFSD1 (465 aa).

The segment at 1–23 is disordered; that stretch reads MEEEDEEARALLAGGPDEADRGA. The Dileucine internalization motif motif lies at 11-12; the sequence is LL. 12 helical membrane passes run 39 to 59, 83 to 103, 113 to 133, 135 to 155, 170 to 191, 213 to 233, 266 to 286, 304 to 324, 331 to 351, 361 to 381, 392 to 412, and 418 to 438; these read LVHRLLVLLLMCFLGFGSYFC, LLYAWYSWSNVVLCFFGGFLI, TIIFSCFVCIGQVVFALGGIF, AFWLMEFGRFVFGIGGESLAV, LNLVFGLQLSMARIGSTVNMNL, ITLMIGGVTCILSLICALALA, LWLIFIICVCYYVAVFPFIGL, AINSVVYVISAPMSPVFGLLV, IIWVLCAVAATLVSHMMLAFT, LLGLSYSLLACALWPMVAFVV, FMQSIQNLGLAIISIIAGMIL, and LFLEVFFIACVSLSLLSVVLL.

The protein belongs to the major facilitator superfamily. As to quaternary structure, homodimer. Interacts with lysosomal protein GLMP (via lumenal domain); the interaction starts while both proteins are still in the endoplasmic reticulum and is required for stabilization of MFSD1 in lysosomes but has no direct effect on its targeting to lysosomes or transporter activity.

The protein resides in the lysosome membrane. The catalysed reaction is L-alpha-aminoacyl-L-arginine(out) = L-alpha-aminoacyl-L-arginine(in). It catalyses the reaction L-arginyl-L-alpha-amino acid(out) = L-arginyl-L-alpha-amino acid(in). The enzyme catalyses L-arginyl-glycine(out) = L-arginyl-glycine(in). It carries out the reaction L-alpha-aminoacyl-L-lysine(out) = L-alpha-aminoacyl-L-lysine(in). The catalysed reaction is L-aspartyl-L-lysine(out) = L-aspartyl-L-lysine(in). It catalyses the reaction L-alanyl-L-lysine(out) = L-alanyl-L-lysine(in). The enzyme catalyses L-lysyl-L-alpha-amino acid(out) = L-lysyl-L-alpha-amino acid(in). It carries out the reaction L-lysyl-L-alanine(out) = L-lysyl-L-alanine(in). The catalysed reaction is L-lysyl-L-lysine(out) = L-lysyl-L-lysine(in). It catalyses the reaction L-lysyl-glycine(out) = L-lysyl-glycine(in). The enzyme catalyses L-alpha-aminoacyl-L-histidine(out) = L-alpha-aminoacyl-L-histidine(in). It carries out the reaction L-histidyl-L-alpha-amino acid(out) = L-histidyl-L-alpha-amino acid(in). The catalysed reaction is L-histidyl-glycine(out) = L-histidyl-glycine(in). In terms of biological role, lysosomal dipeptide uniporter that selectively exports lysine, arginine or histidine-containing dipeptides with a net positive charge from the lysosome lumen into the cytosol. Could play a role in a specific type of protein O-glycosylation indirectly regulating macrophages migration and tissue invasion. Also essential for liver homeostasis. This chain is Lysosomal dipeptide transporter MFSD1, found in Pongo abelii (Sumatran orangutan).